A 576-amino-acid polypeptide reads, in one-letter code: MDIKLLYRLAKYLRFYKKDLIIVMISLLSVSASLLLIGSVFRNLIDKGLAEDNILSVNKSILYICLLIVILSVASFFRSYFINNVAEKIVNQIRKEAYSNLINYEIEEYEELKIGDIISRLTNDIDQIATLIVNFLSFFIRNSVMLIGGITLMFFESFKLASIVIVTIPILLVPLIKFGKHVKSLSKKALESKSLLVSDIDETFNNIRVIYAFNHQINKISDFDTKLQSYLIYCKIRLKIRALFFAISIAVIFLTITLIVWIGASDIVQGDLSAGQIISFIYYAIIAGVSSGGIFELLSEIHLPTTALERIITIIDKISIVHNNYYALNNPDTVSIEFKNVDFTYNSRPNLKIINNMSLKINANKFVGIVGRSGAGKSTLIQLLLRFYRQDNGTILINNQDISRINPTDIRKFIAYVPQEASIFSDTIKSNIIFGNNKASDYEINEIIKITGIEEFSNKLHDGINTKIGEKGVRLSGGQKQRIAIARALLRKPKILLLDEAMSALDTMSEQKLLNAIKKIMKGNIIISIAHRISSIESADYILVIDKGKVVTAGSHYDLSKNSEIYRNICREQLTI.

Positions 20–303 (LIIVMISLLS…IFELLSEIHL (284 aa)) constitute an ABC transmembrane type-1 domain. The next 6 membrane-spanning stretches (helical) occupy residues 21-41 (IIVM…GSVF), 61-81 (ILYI…RSYF), 135-155 (FLSF…LMFF), 158-178 (FKLA…LIKF), 242-262 (ALFF…IVWI), and 277-297 (IISF…IFEL). The ABC transporter domain occupies 336-572 (IEFKNVDFTY…SEIYRNICRE (237 aa)). 371 to 378 (GRSGAGKS) provides a ligand contact to ATP.

The protein belongs to the ABC transporter superfamily. As to quaternary structure, homodimer.

It localises to the cell inner membrane. Its function is as follows. Part of an ABC transporter complex. Transmembrane domains (TMD) form a pore in the inner membrane and the ATP-binding domain (NBD) is responsible for energy generation. This is Putative export ATP-binding/permease protein RT0691 from Rickettsia typhi (strain ATCC VR-144 / Wilmington).